The sequence spans 1798 residues: Non-reducing polyketide synthase nscA (1798 aa).

An N-terminal acylcarrier protein transacylase domain (SAT) region spans residues 25-256 (RRLDQHSKDR…PLPVYDGLCH (232 aa)). Residues 392–825 (SSKLAIVGMA…GGNTTLLLED (434 aa)) form the Ketosynthase family 3 (KS3) domain. Residues 436–455 (NTHYDPTGKTENTTQTPYGN) are disordered. The span at 444–453 (KTENTTQTPY) shows a compositional bias: polar residues. Active-site for beta-ketoacyl synthase activity residues include cysteine 565, histidine 700, and histidine 743. The malonyl-CoA:ACP transacylase (MAT) domain stretch occupies residues 931-1230 (FTGQGAYYHG…PSASAMSSCR (300 aa)). Positions 1322 to 1458 (HQITAETVEA…AMIRFEDPVA (137 aa)) are N-terminal hotdog fold. The 311-residue stretch at 1322-1632 (HQITAETVEA…FRRVPRLLMD (311 aa)) folds into the PKS/mFAS DH domain. Histidine 1354 functions as the Proton acceptor; for dehydratase activity in the catalytic mechanism. A product template (PT) domain region spans residues 1390–1628 (HMNLTDVEVL…GMIRFRRVPR (239 aa)). A C-terminal hotdog fold region spans residues 1486 to 1632 (ASRLSKPLAY…FRRVPRLLMD (147 aa)). Residue aspartate 1543 is the Proton donor; for dehydratase activity of the active site. The tract at residues 1685–1719 (MASKAPEPAPLLATSSESSTPKESPIVTPAESERA) is disordered. A compositionally biased stretch (low complexity) spans 1698 to 1709 (TSSESSTPKESP). The Carrier domain maps to 1721 to 1798 (PVDNNMISQC…EMTAWIEEYC (78 aa)). Residue serine 1758 is modified to O-(pantetheine 4'-phosphoryl)serine.

Requires pantetheine 4'-phosphate as cofactor.

Its pathway is secondary metabolite biosynthesis. Its function is as follows. Non-reducing polyketide synthase; part of the gene cluster that mediates the biosynthesis of neosartoricin B, a prenylated anthracenone that probably exhibits T-cell antiproliferative activity, suggestive of a physiological role as an immunosuppressive agent. The non-reducing polyketide synthase nscA probably synthesizes and cyclizes the decaketide backbone. The hydrolase nscB then mediates the product release through hydrolysis followed by spontaneous decarboxylation. The prenyltransferase nscD catalyzes the addition of the dimethylallyl group to the aromatic C5. The FAD-dependent monooxygenase nscC is then responsible for the stereospecific hydroxylation at C2. Neosartoricin B can be converted into two additional compounds neosartoricins C and D. Neosartoricin C is a spirocyclic compound that is cyclized through the attack of C3 hydroxyl on C14, followed by dehydration. On the other hand, neosartoricin D is a further cyclized compound in which attack of C2 on C14 in neosartoricin C results in the formation of the acetal-containing dioxabicyclo-octanone ring. Both of these compounds are novel and possibly represent related metabolites of the gene cluster. The chain is Non-reducing polyketide synthase nscA from Arthroderma benhamiae (strain ATCC MYA-4681 / CBS 112371) (Trichophyton mentagrophytes).